A 404-amino-acid chain; its full sequence is Triose phosphate/phosphate translocator, chloroplastic (404 aa).

The transit peptide at 1-74 directs the protein to the chloroplast; that stretch reads MESRVLSRTT…GPVCSRREKT (74 aa). The Chloroplast intermembrane portion of the chain corresponds to 75–98; that stretch reads AVQPCRAASGSSGEAKTGFLEKYP. The helical transmembrane segment at 99–119 threads the bilayer; that stretch reads ALVTGSFFFMWYFLNVIFNIL. Residues 120-131 lie on the Lumenal side of the membrane; it reads NKKIYNYFPYPY. A helical transmembrane segment spans residues 132-152; it reads FVSVIHLFVGVVYCLASWSVG. At 153–209 the chain is on the chloroplast intermembrane side; sequence LPKRAPMDSKLLKLLIPVAVCHAIGHVTSNVSFAAVAVSFTHTIKALEPFFNAAASQ. Residues 210 to 230 traverse the membrane as a helical segment; sequence FVLGQSIPITLWLSLAPVVIG. The Lumenal segment spans residues 231-274; that stretch reads VSMASLTELSFNWLGFISAMISNVSFTYRSLYSKKAMTDMDSTN. Residues 275-294 form a helical membrane-spanning segment; sequence IYAYISIIALFVCLPPAIIV. The Chloroplast intermembrane segment spans residues 295-372; that stretch reads EGPQLMKHGF…IAFGNKISTQ (78 aa). Residues 373–393 form a helical membrane-spanning segment; sequence TAIGTSIAIAGVALYSLIKAK. Over 394–404 the chain is Lumenal; sequence MEEEKRQMKST.

Belongs to the TPT transporter family. TPT (TC 2.A.7.9) subfamily. In terms of processing, the N-terminus is blocked.

Its subcellular location is the plastid. It localises to the chloroplast membrane. Mediates the export of fixed carbons from the chloroplasts into the cytosol in the form of triose phosphates. This Spinacia oleracea (Spinach) protein is Triose phosphate/phosphate translocator, chloroplastic.